A 457-amino-acid chain; its full sequence is Multidrug resistance protein MdtK (457 aa).

Transmembrane regions (helical) follow at residues 11-31 (LLALAIPVILAQIAQTAMGFV), 53-73 (IWLPAILFGHGLLLALTPVIA), 93-113 (WLAGCVSVLIMFVLWNAGYII), 127-147 (AVGYLRALLWGAPGYLFFQVA), 160-180 (GMVIGFLGLLVNIPVNYIFIY), 188-208 (LGGVGCGVATAAVYWVMFIAM), 243-263 (LPIALALFFEVTLFAVVALLV), 276-296 (IALNFSSLMFVLPMSLAAAVT), 314-334 (AARTGLGVGVCMAVITAIFTV), 357-377 (LMLLAAVYQISDSIQVIGSGI), 387-407 (IFFITFTAYWVLGLPSGYILA), and 418-438 (PAGFWMGFIIGLTSAAIMMML).

Belongs to the multi antimicrobial extrusion (MATE) (TC 2.A.66.1) family. MdtK subfamily.

The protein resides in the cell inner membrane. Its function is as follows. Multidrug efflux pump that functions probably as a Na(+)/drug antiporter. The sequence is that of Multidrug resistance protein MdtK from Citrobacter koseri (strain ATCC BAA-895 / CDC 4225-83 / SGSC4696).